A 446-amino-acid chain; its full sequence is Na(+)-translocating NADH-quinone reductase subunit A (446 aa).

The protein belongs to the NqrA family. As to quaternary structure, composed of six subunits; NqrA, NqrB, NqrC, NqrD, NqrE and NqrF.

The enzyme catalyses a ubiquinone + n Na(+)(in) + NADH + H(+) = a ubiquinol + n Na(+)(out) + NAD(+). With respect to regulation, this reaction is tightly coupled to the Na(+) pumping activity and specifically requires Na(+) for activity. Inhibited by korormicin and 2-N-heptyl-4-hydroxyquinoline N-oxide (HQNO). NQR complex catalyzes the reduction of ubiquinone-1 to ubiquinol by two successive reactions, coupled with the transport of Na(+) ions from the cytoplasm to the periplasm. NqrA to NqrE are probably involved in the second step, the conversion of ubisemiquinone to ubiquinol. The protein is Na(+)-translocating NADH-quinone reductase subunit A of Vibrio alginolyticus.